A 472-amino-acid chain; its full sequence is Cysteine--tRNA ligase (472 aa).

Position 29 (cysteine 29) interacts with Zn(2+). The short motif at 31–41 (PTVYNYIHIGN) is the 'HIGH' region element. Zn(2+) is bound by residues cysteine 214, histidine 239, and glutamate 243. The 'KMSKS' region signature appears at 273-277 (KMSKS). Position 276 (lysine 276) interacts with ATP.

The protein belongs to the class-I aminoacyl-tRNA synthetase family. Monomer. Zn(2+) serves as cofactor.

Its subcellular location is the cytoplasm. The enzyme catalyses tRNA(Cys) + L-cysteine + ATP = L-cysteinyl-tRNA(Cys) + AMP + diphosphate. The protein is Cysteine--tRNA ligase of Lactobacillus gasseri (strain ATCC 33323 / DSM 20243 / BCRC 14619 / CIP 102991 / JCM 1131 / KCTC 3163 / NCIMB 11718 / NCTC 13722 / AM63).